Consider the following 89-residue polypeptide: Small ribosomal subunit protein uS15 (89 aa).

It belongs to the universal ribosomal protein uS15 family. In terms of assembly, part of the 30S ribosomal subunit. Forms a bridge to the 50S subunit in the 70S ribosome, contacting the 23S rRNA.

Its function is as follows. One of the primary rRNA binding proteins, it binds directly to 16S rRNA where it helps nucleate assembly of the platform of the 30S subunit by binding and bridging several RNA helices of the 16S rRNA. In terms of biological role, forms an intersubunit bridge (bridge B4) with the 23S rRNA of the 50S subunit in the ribosome. The chain is Small ribosomal subunit protein uS15 from Thermosynechococcus vestitus (strain NIES-2133 / IAM M-273 / BP-1).